Consider the following 506-residue polypeptide: Anaerobic nitric oxide reductase transcription regulator NorR (506 aa).

Position 57 is a 4-aspartylphosphate (D57). A Sigma-54 factor interaction domain is found at 187-416 (MIGLSPAMTQ…LEHAIHRAVV (230 aa)). ATP contacts are provided by residues 215–222 (GETGTGKE) and 278–287 (ADNGTLFLDE). The segment at residues 481 to 500 (WAASARALETDVANLHRLAK) is a DNA-binding region (H-T-H motif).

It participates in nitrogen metabolism; nitric oxide reduction. Required for the expression of anaerobic nitric oxide (NO) reductase, acts as a transcriptional activator for at least the norVW operon. Activation also requires sigma-54. The polypeptide is Anaerobic nitric oxide reductase transcription regulator NorR (Salmonella schwarzengrund (strain CVM19633)).